A 459-amino-acid chain; its full sequence is DNA polymerase subunit gamma-2 (459 aa).

In terms of assembly, heterotrimer composed of a catalytic subunit and a homodimer of accessory subunits (POLG:POLG2).

The protein resides in the mitochondrion. It is found in the mitochondrion matrix. The protein localises to the mitochondrion nucleoid. Accessory subunit of DNA polymerase gamma solely responsible for replication of mitochondrial DNA (mtDNA). Acts as an allosteric regulator of the holoenzyme activities. Enhances the polymerase activity and the processivity of POLG by increasing its interactions with the DNA template. Suppresses POLG exonucleolytic proofreading especially toward homopolymeric templates bearing mismatched termini. Binds to single-stranded DNA. This is DNA polymerase subunit gamma-2 (Polg2) from Mus musculus (Mouse).